The sequence spans 421 residues: Glutamyl-tRNA reductase (421 aa).

Substrate is bound by residues 49–52 (TCNR), serine 109, 114–116 (EPQ), and glutamine 120. Cysteine 50 acts as the Nucleophile in catalysis. NADP(+) is bound at residue 189–194 (GLGQIG).

The protein belongs to the glutamyl-tRNA reductase family. In terms of assembly, homodimer.

It catalyses the reaction (S)-4-amino-5-oxopentanoate + tRNA(Glu) + NADP(+) = L-glutamyl-tRNA(Glu) + NADPH + H(+). Its pathway is porphyrin-containing compound metabolism; protoporphyrin-IX biosynthesis; 5-aminolevulinate from L-glutamyl-tRNA(Glu): step 1/2. Functionally, catalyzes the NADPH-dependent reduction of glutamyl-tRNA(Glu) to glutamate 1-semialdehyde (GSA). The protein is Glutamyl-tRNA reductase of Limosilactobacillus reuteri (strain DSM 20016) (Lactobacillus reuteri).